Here is a 1400-residue protein sequence, read N- to C-terminus: DNA-directed RNA polymerase subunit beta' (1400 aa).

Zn(2+) is bound by residues Cys70, Cys72, Cys85, and Cys88. Mg(2+)-binding residues include Asp460, Asp462, and Asp464. 4 residues coordinate Zn(2+): Cys814, Cys888, Cys895, and Cys898.

Belongs to the RNA polymerase beta' chain family. In terms of assembly, the RNAP catalytic core consists of 2 alpha, 1 beta, 1 beta' and 1 omega subunit. When a sigma factor is associated with the core the holoenzyme is formed, which can initiate transcription. Mg(2+) serves as cofactor. It depends on Zn(2+) as a cofactor.

The catalysed reaction is RNA(n) + a ribonucleoside 5'-triphosphate = RNA(n+1) + diphosphate. Its function is as follows. DNA-dependent RNA polymerase catalyzes the transcription of DNA into RNA using the four ribonucleoside triphosphates as substrates. In Methylococcus capsulatus (strain ATCC 33009 / NCIMB 11132 / Bath), this protein is DNA-directed RNA polymerase subunit beta'.